Consider the following 560-residue polypeptide: Protein GAT2 (560 aa).

3 disordered regions span residues 274–297, 345–383, and 412–461; these read RQQE…FSNK, FLST…ISSS, and LNTK…SDEK. Residues 347 to 361 show a composition bias toward low complexity; sequence STSSSSPSPTAGSAP. The segment covering 369-378 has biased composition (basic and acidic residues); sequence RQDDPNDKKM. Basic residues predominate over residues 414–425; that stretch reads TKKKNNRGRPRA. Over residues 428-456 the composition is skewed to polar residues; it reads RQPTLTTSSHFINNSNPGAAAVSTTTPAA. The segment at 472–497 adopts a GATA-type zinc-finger fold; the sequence is CFHCGETETPEWRKGPYGTRTLCNAC.

The polypeptide is Protein GAT2 (GAT2) (Saccharomyces cerevisiae (strain ATCC 204508 / S288c) (Baker's yeast)).